The following is a 126-amino-acid chain: Large ribosomal subunit protein uL22 (126 aa).

The protein belongs to the universal ribosomal protein uL22 family. As to quaternary structure, part of the 50S ribosomal subunit.

Functionally, this protein binds specifically to 23S rRNA; its binding is stimulated by other ribosomal proteins, e.g. L4, L17, and L20. It is important during the early stages of 50S assembly. It makes multiple contacts with different domains of the 23S rRNA in the assembled 50S subunit and ribosome. Its function is as follows. The globular domain of the protein is located near the polypeptide exit tunnel on the outside of the subunit, while an extended beta-hairpin is found that lines the wall of the exit tunnel in the center of the 70S ribosome. This is Large ribosomal subunit protein uL22 from Paracoccus denitrificans (strain Pd 1222).